We begin with the raw amino-acid sequence, 245 residues long: Terpene cyclase ausL (245 aa).

7 consecutive transmembrane segments (helical) span residues 17 to 37, 51 to 71, 76 to 96, 113 to 133, 138 to 158, 170 to 190, and 206 to 226; these read ILAI…VNYI, IGIL…WMFP, HWQG…LVTL, IVFI…ALAA, ALGF…GGIA, SYLI…KLCI, and MCWF…FLYF.

This sequence belongs to the paxB family.

The protein resides in the membrane. The protein operates within secondary metabolite biosynthesis; terpenoid biosynthesis. Functionally, terpene cyclase; part of the gene cluster A that mediates the biosynthesis of the fungal meroterpenoid acetoxydehydroaustin. The first step of the pathway is the synthesis of 3,5-dimethylorsellinic acid by the polyketide synthase ausA. 3,5-dimethylorsellinic acid is then prenylated by the polyprenyl transferase ausN. Further epoxidation by the FAD-dependent monooxygenase ausM and cyclization by the probable terpene cyclase ausL lead to the formation of protoaustinoid A. Protoaustinoid A is then oxidized to spiro-lactone preaustinoid A3 by the combined action of the FAD-binding monooxygenases ausB and ausC, and the dioxygenase ausE. Acid-catalyzed keto-rearrangement and ring contraction of the tetraketide portion of preaustinoid A3 by ausJ lead to the formation of preaustinoid A4. The aldo-keto reductase ausK, with the help of ausH, is involved in the next step by transforming preaustinoid A4 into isoaustinone which is in turn hydroxylated by the P450 monooxygenase ausI to form austinolide. The cytochrome P450 monooxygenase ausG then modifies austinolide to austinol. Austinol is further acetylated to austin by the O-acetyltransferase ausP, which spontaneously changes to dehydroaustin. The cytochrome P450 monooxygenase then converts dehydroaustin is into 7-dehydrodehydroaustin. The hydroxylation catalyzed by ausR permits the second O-acetyltransferase ausQ to add an additional acetyl group to the molecule, leading to the formation of acetoxydehydroaustin. Due to genetic rearrangements of the clusters and the subsequent loss of some enzymes, the end product of the Penicillium brasilianum austinoid biosynthesis clusters is acetoxydehydroaustin. The polypeptide is Terpene cyclase ausL (Penicillium brasilianum).